The chain runs to 396 residues: MGALDDLRVLDLTQVLAGPYCTMLLADMGADVVKVERPGGDLIRSNPPFVSDGDEEAYGGYFQSVNRGKRSLELNLGTDEDREAFLSLVERADVVVENFKAGTMEKFDCGYETLREHNPDLIYSSIRGFGDPRTGETHRQGQPSFDLIAQALGGVMEITGQSDGPPTKVGPGVGDLFTAVLNAVGILAAVHHRERTGEGQYVDTAMYDSMVSLCERTVYQYSCDGESPTRQGNSHPTLFPYDSFEAADGHVVIAAFADGHWEALCEAMERPDLAAEYPDAGSRIANRESLRAEIAEWTTAIDSETLLDLLEGRVPAAPVQNTADIFDDPHIHDREMLAEVDQPGADDQMTIAGSPIKMTETMPSPGGRAPLLDEHKTELLDEAGVDTGTNRVESDD.

Aspartate 175 serves as the catalytic Nucleophile.

This sequence belongs to the CoA-transferase III family.

It catalyses the reaction mesaconate + succinyl-CoA = 2-methylfumaryl-CoA + succinate. Its function is as follows. Involved in the methylaspartate cycle. Catalyzes the transfer of the CoA moiety from succinyl-CoA to mesaconate to generate mesaconyl-CoA (2-methylfumaryl-CoA) and succinate. This is Succinyl-CoA:mesaconate CoA-transferase from Haloarcula marismortui (strain ATCC 43049 / DSM 3752 / JCM 8966 / VKM B-1809) (Halobacterium marismortui).